The chain runs to 390 residues: Ureide permease 1 (390 aa).

Residues 1–9 (MYMIESKGG) are Extracellular-facing. The chain crosses the membrane as a helical span at residues 10–30 (AIACMLLALLFLGTWPAIMTL). The Cytoplasmic portion of the chain corresponds to 31–44 (TERRGRLPQHTYLD). A helical membrane pass occupies residues 45–65 (YTLTNLLAAVIIALTLGEIGP). Residues 66 to 78 (SRPNFFTQLSQDN) lie on the Extracellular side of the membrane. The chain crosses the membrane as a helical span at residues 79-99 (WQSVMFAMAGGIVLSLGNLAT). The Cytoplasmic portion of the chain corresponds to 100–101 (QY). A helical transmembrane segment spans residues 102 to 122 (AWAYVGLSVTEVITASITVVI). At 123 to 136 (GTTLNYFLDDRINR) the chain is on the extracellular side. The helical transmembrane segment at 137–157 (AEVLFPGVACFLIAVCFGSAV) threads the bilayer. Topologically, residues 158 to 221 (HKSNAADNKT…RAIKVFGKST (64 aa)) are cytoplasmic. An ATP-binding site is contributed by 213 to 220 (AIKVFGKS). Residues 222-242 (IIGLVITFFAGICFSLFSPAF) form a helical membrane-spanning segment. At 243 to 261 (NLATNDQWHTLKHGVPKLN) the chain is on the extracellular side. The chain crosses the membrane as a helical span at residues 262 to 282 (VYTAFFYFSISAFVVALILNI). Topologically, residues 283–307 (RFLYWPILGLPRSSFKAYLNDWNGR) are cytoplasmic. Residues 308–328 (GWSFLAGFLCGFGNGLQFMGG) form a helical membrane-spanning segment. The Extracellular segment spans residues 329–333 (QAAGY). The chain crosses the membrane as a helical span at residues 334 to 354 (AAADAVQALPLVSTFWGILLF). Topologically, residues 355–363 (GEYRRSSRK) are cytoplasmic. Residues 364–384 (TYTLLISMLLMFIVAVAVLMA) form a helical membrane-spanning segment. Topologically, residues 385–390 (SSGHRK) are extracellular.

This sequence belongs to the plant ureide permease (TC 2.A.7.19) family. As to expression, expressed in leaves, flowers, roots and stems.

The protein resides in the membrane. Functionally, proton-coupled transporter that transports a wide spectrum of oxo derivatives of heterocyclic nitrogen compounds, including allantoin, uric acid and xanthine, but not adenine. Mediates high affinity transport of uracil and 5-fluorouracil (a toxic uracil analog). Mediates transport of free pyrimidines and may function during early seedling development in salvage pathways, by the utilization of pyrimidines from seed storage tissue. The polypeptide is Ureide permease 1 (Arabidopsis thaliana (Mouse-ear cress)).